The sequence spans 333 residues: Mycothiol acetyltransferase (333 aa).

N-acetyltransferase domains follow at residues 18 to 170 (PTLS…LPEP) and 176 to 333 (VTVR…AAAD). Glu-46 lines the 1D-myo-inositol 2-(L-cysteinylamino)-2-deoxy-alpha-D-glucopyranoside pocket. 98 to 100 (IVV) contributes to the acetyl-CoA binding site. Glu-203, Lys-242, and Glu-261 together coordinate 1D-myo-inositol 2-(L-cysteinylamino)-2-deoxy-alpha-D-glucopyranoside. Acetyl-CoA contacts are provided by residues 265–267 (VGV) and 272–278 (GGAGLGR). 1D-myo-inositol 2-(L-cysteinylamino)-2-deoxy-alpha-D-glucopyranoside is bound at residue Tyr-299. 304-309 (NERAVR) serves as a coordination point for acetyl-CoA.

The protein belongs to the acetyltransferase family. MshD subfamily. As to quaternary structure, monomer.

It carries out the reaction 1D-myo-inositol 2-(L-cysteinylamino)-2-deoxy-alpha-D-glucopyranoside + acetyl-CoA = mycothiol + CoA + H(+). Catalyzes the transfer of acetyl from acetyl-CoA to desacetylmycothiol (Cys-GlcN-Ins) to form mycothiol. This chain is Mycothiol acetyltransferase, found in Frankia alni (strain DSM 45986 / CECT 9034 / ACN14a).